The chain runs to 314 residues: Acetyl-coenzyme A carboxylase carboxyl transferase subunit alpha (314 aa).

A CoA carboxyltransferase C-terminal domain is found at 32–289 (EIDMLEASLK…KKMFLKHLNE (258 aa)).

The protein belongs to the AccA family. In terms of assembly, acetyl-CoA carboxylase is a heterohexamer composed of biotin carboxyl carrier protein (AccB), biotin carboxylase (AccC) and two subunits each of ACCase subunit alpha (AccA) and ACCase subunit beta (AccD).

It localises to the cytoplasm. It carries out the reaction N(6)-carboxybiotinyl-L-lysyl-[protein] + acetyl-CoA = N(6)-biotinyl-L-lysyl-[protein] + malonyl-CoA. It functions in the pathway lipid metabolism; malonyl-CoA biosynthesis; malonyl-CoA from acetyl-CoA: step 1/1. Functionally, component of the acetyl coenzyme A carboxylase (ACC) complex. First, biotin carboxylase catalyzes the carboxylation of biotin on its carrier protein (BCCP) and then the CO(2) group is transferred by the carboxyltransferase to acetyl-CoA to form malonyl-CoA. This chain is Acetyl-coenzyme A carboxylase carboxyl transferase subunit alpha, found in Staphylococcus epidermidis (strain ATCC 35984 / DSM 28319 / BCRC 17069 / CCUG 31568 / BM 3577 / RP62A).